Here is a 418-residue protein sequence, read N- to C-terminus: MSGTVVAVPPRVARALDLLNFSLADVRDGLGPYLSIYLLLIHDWDQASIGFVMAVGGIAAIVAQTPIGALVDRTTAKRALVVAGAVLVTAAAVAMPLFAGLYSISVLQAVTGIASSVFAPALAAITLGAVGPQFFARRIGRNEAFNHAGNASAAGATGALAYFFGPVVVFWVLAGMALISVLATLRIPPDAVDHDLARGMDHAPGEPHPQPSRFTVLAHNRELVIFGAAVVAFHFANAAMLPLVGELLALHNRDEGTALMSSCIVAAQVVMVPVAYVVGTRADAWGRKPIFLVGFAVLTARGFLYTLSDNSYWLVGVQLLDGIGAGIFGALFPLVVQDVTHGTGHFNISLGAVTTATGIGAALSNLVAGWIVVVAGYDAAFMSLGALAGAGFLLYLVAMPETVDSDVRVRSRPTLGGK.

Transmembrane regions (helical) follow at residues 51 to 71 (FVMAVGGIAAIVAQTPIGALV), 79 to 99 (ALVVAGAVLVTAAAVAMPLFA), 110 to 130 (VTGIASSVFAPALAAITLGAV), 163 to 183 (FFGPVVVFWVLAGMALISVLA), 224 to 244 (VIFGAAVVAFHFANAAMLPLV), 258 to 278 (ALMSSCIVAAQVVMVPVAYVV), 289 to 309 (PIFLVGFAVLTARGFLYTLSD), 315 to 335 (VGVQLLDGIGAGIFGALFPLV), 356 to 376 (ATGIGAALSNLVAGWIVVVAG), and 379 to 399 (AAFMSLGALAGAGFLLYLVAM).

It belongs to the major facilitator superfamily.

Its subcellular location is the cell membrane. This is an uncharacterized protein from Mycobacterium tuberculosis (strain CDC 1551 / Oshkosh).